Reading from the N-terminus, the 253-residue chain is Probable transcriptional regulatory protein TM_0466 (253 aa).

This sequence belongs to the TACO1 family.

The protein localises to the cytoplasm. In Thermotoga maritima (strain ATCC 43589 / DSM 3109 / JCM 10099 / NBRC 100826 / MSB8), this protein is Probable transcriptional regulatory protein TM_0466.